The sequence spans 197 residues: GCN5-related N-acetyltransferase 1, chloroplastic (197 aa).

Residues 1 to 37 (MFLGGTISTPPASLRLRSTLNPQNAVTQSSSQATFPA) constitute a chloroplast transit peptide. The span at 23–34 (QNAVTQSSSQAT) shows a compositional bias: polar residues. A disordered region spans residues 23–46 (QNAVTQSSSQATFPAAMQRKPPSY). The N-acetyltransferase domain maps to 58 to 195 (FLLRRTTEGL…GMVFIRKQRN (138 aa)). Acetyl-CoA-binding positions include 129–131 (VVV), 137–142 (SCGLGK), 165–167 (EPR), and tyrosine 172. The active-site Proton donor is tyrosine 172.

The protein belongs to the acetyltransferase family. GNAT subfamily. In terms of assembly, oligomer. In terms of processing, autoacetylated. As to expression, expressed in green tissues. Accumulates mainly in flowers and young leaves, and, to a lower extent, in stems and mature leaves, but barely in roots.

It localises to the plastid. It is found in the chloroplast. The catalysed reaction is an N-terminal L-alpha-aminoacyl-[protein] + acetyl-CoA = N-terminal N(alpha)-acetyl-L-alpha-aminoacyl-[protein] + CoA + H(+). The enzyme catalyses L-lysyl-[protein] + acetyl-CoA = N(6)-acetyl-L-lysyl-[protein] + CoA + H(+). It carries out the reaction 5-methoxytryptamine + acetyl-CoA = melatonin + CoA + H(+). It catalyses the reaction serotonin + acetyl-CoA = N-acetylserotonin + CoA + H(+). Its activity is regulated as follows. Inhibited by 5-methoxytryptamine in vitro. Functionally, protein acetyltransferase with dual specificity triggering both N-alpha-acetylation (NTA) and epsilon-lysine acetylation (KA), possibly with a low efficiency or toward specific plastid substrates. Involved in melatonin biosynthesis by catalyzing the formation of N-acetylserotonin (NAS) from serotonin and of melatonin (N-acetyl-5-methoxytryptamine) from 5-methoxytryptamine (5-MT). The protein is GCN5-related N-acetyltransferase 1, chloroplastic of Arabidopsis thaliana (Mouse-ear cress).